A 427-amino-acid polypeptide reads, in one-letter code: Glutamyl-tRNA reductase (427 aa).

Substrate-binding positions include 49-52 (TCNR), S109, 114-116 (EGQ), and Q120. C50 acts as the Nucleophile in catalysis. Residue 188–193 (GAGKMA) coordinates NADP(+).

It belongs to the glutamyl-tRNA reductase family. As to quaternary structure, homodimer.

It catalyses the reaction (S)-4-amino-5-oxopentanoate + tRNA(Glu) + NADP(+) = L-glutamyl-tRNA(Glu) + NADPH + H(+). It functions in the pathway porphyrin-containing compound metabolism; protoporphyrin-IX biosynthesis; 5-aminolevulinate from L-glutamyl-tRNA(Glu): step 1/2. The protein operates within porphyrin-containing compound metabolism; chlorophyll biosynthesis. Its activity is regulated as follows. Feedback inhibition by heme. Functionally, catalyzes the NADPH-dependent reduction of glutamyl-tRNA(Glu) to glutamate 1-semialdehyde (GSA). In Synechocystis sp. (strain ATCC 27184 / PCC 6803 / Kazusa), this protein is Glutamyl-tRNA reductase.